The sequence spans 159 residues: 2-C-methyl-D-erythritol 2,4-cyclodiphosphate synthase (159 aa).

2 residues coordinate a divalent metal cation: aspartate 8 and histidine 10. 4-CDP-2-C-methyl-D-erythritol 2-phosphate contacts are provided by residues 8-10 (DVH) and 34-35 (HS). A divalent metal cation is bound at residue histidine 42. 4-CDP-2-C-methyl-D-erythritol 2-phosphate-binding positions include 56–58 (DIG), 61–65 (FPDTD), 100–106 (AQAPKML), 132–135 (TTTE), phenylalanine 139, and arginine 142.

Belongs to the IspF family. In terms of assembly, homotrimer. A divalent metal cation is required as a cofactor.

The enzyme catalyses 4-CDP-2-C-methyl-D-erythritol 2-phosphate = 2-C-methyl-D-erythritol 2,4-cyclic diphosphate + CMP. Its pathway is isoprenoid biosynthesis; isopentenyl diphosphate biosynthesis via DXP pathway; isopentenyl diphosphate from 1-deoxy-D-xylulose 5-phosphate: step 4/6. Its function is as follows. Involved in the biosynthesis of isopentenyl diphosphate (IPP) and dimethylallyl diphosphate (DMAPP), two major building blocks of isoprenoid compounds. Catalyzes the conversion of 4-diphosphocytidyl-2-C-methyl-D-erythritol 2-phosphate (CDP-ME2P) to 2-C-methyl-D-erythritol 2,4-cyclodiphosphate (ME-CPP) with a corresponding release of cytidine 5-monophosphate (CMP). In Salmonella choleraesuis (strain SC-B67), this protein is 2-C-methyl-D-erythritol 2,4-cyclodiphosphate synthase.